Reading from the N-terminus, the 595-residue chain is MTTHCISTGERQRAVKAALGQLPFDLLLTNAALIDMATGEVRNVDVGIVGALIASVHPCGTLTEALQTQDLAGAYLSPGLIDTHVHVESSHLPPERYAEIVVAQGTTTIFWDPHELANVLGVAGVRYAVDASRGLPLRVICAAPSSVPSTPGLEMSGADFAGQEMETMLAWPEVGGVAEVMDMHGVLNGSERMLEILNAGLNSGKLIEGHARGLSGADLQAYLAAGVTSDHELTSGADALEKLRAGLTLEIRGSHPYLLPEIVAALKTLPHLSSQITVCTDDVPPDMLLEKGGIVALLNMLIEQGLPATDVLRMATLNAAIRLQRNDLGLIAAGRVADLVVFDSLTQLRAQQVYVAGKLTAQQGKMQKPLNANPNVAAPRDTLRLQPLAAGDFVLKVPAIRHGKATLRHIKGARFTQWNETTVEVRNGEVQIPQGFSLIWVQHRHGRHQATPQLALLEGWGELRGAIATSYSHDSHNLVVLGRDAADMALAANALIASGGGMALSQNGEILAQVAMPIAGMLSDLPAAELAQQFKNLRDLSARIADWEPPYRVFKAIEGTCLACNAGPHLTDLGLTDGSTRQIVDPLIACWETPA.

Belongs to the metallo-dependent hydrolases superfamily. Adenine deaminase family. As to quaternary structure, homodimer. The cofactor is Mn(2+).

The enzyme catalyses adenine + H2O + H(+) = hypoxanthine + NH4(+). In Serratia proteamaculans (strain 568), this protein is Adenine deaminase.